A 90-amino-acid polypeptide reads, in one-letter code: Cell division topological specificity factor (90 aa).

It belongs to the MinE family.

In terms of biological role, prevents the cell division inhibition by proteins MinC and MinD at internal division sites while permitting inhibition at polar sites. This ensures cell division at the proper site by restricting the formation of a division septum at the midpoint of the long axis of the cell. This chain is Cell division topological specificity factor, found in Francisella philomiragia subsp. philomiragia (strain ATCC 25017 / CCUG 19701 / FSC 153 / O#319-036).